Reading from the N-terminus, the 488-residue chain is NAD-reducing hydrogenase HoxS subunit beta (488 aa).

Ni(2+) contacts are provided by cysteine 62, cysteine 65, cysteine 458, and cysteine 461.

This sequence belongs to the [NiFe]/[NiFeSe] hydrogenase large subunit family. In terms of assembly, tetramer of an alpha and a gamma subunits (flavin-containing dimer), and a delta and a nickel-containing beta subunits (hydrogenase dimer). It depends on FMN as a cofactor. The cofactor is Ni(2+).

The protein resides in the cytoplasm. The enzyme catalyses H2 + NAD(+) = NADH + H(+). This Cupriavidus necator (strain ATCC 17699 / DSM 428 / KCTC 22496 / NCIMB 10442 / H16 / Stanier 337) (Ralstonia eutropha) protein is NAD-reducing hydrogenase HoxS subunit beta (hoxH).